Consider the following 759-residue polypeptide: ARF GTPase-activating protein GIT2 (759 aa).

An Arf-GAP domain is found at 1-124; that stretch reads MSKRLRSSEV…AFVHRLPCRD (124 aa). The C4-type zinc-finger motif lies at 11-34; sequence CADCSGPDPSWASVNRGTFLCDEC. ANK repeat units lie at residues 132–161, 166–195, and 199–228; these read DLSK…QANF, KGNT…DPGT, and SGKT…ELTD. Residues 379–422 are disordered; that stretch reads QHSVESQDNDQPDYDSVASDEDTDLETTASKTNRQKSLDSDLSD. Acidic residues predominate over residues 385 to 403; the sequence is QDNDQPDYDSVASDEDTDL. A phosphoserine mark is found at S394 and S397. T401 carries the phosphothreonine modification. 3 positions are modified to phosphoserine: S415, S418, and S421. The stretch at 437 to 478 forms a coiled coil; the sequence is LVASEAKIQQLMKVNNNLSDELRIMQKKLQTLQSENSNLRKQ. The segment covering 480–499 has biased composition (polar residues); the sequence is TTNVYQVQTGSEYTDTSNHS. Disordered regions lie at residues 480–538 and 554–643; these read TTNV…EESR and VTSS…TEDV. Phosphotyrosine is present on Y484. A compositionally biased stretch (low complexity) spans 555–569; that stretch reads TSSSSLPSFPSTLSW. Phosphoserine is present on residues S559, S562, and S570. Residues 570 to 583 are compositionally biased toward basic and acidic residues; it reads SRDESARRASRLEK. Polar residues predominate over residues 584–597; that stretch reads QNSTPESDYDNTPN. T587 carries the post-translational modification Phosphothreonine. S614 is modified (phosphoserine).

May form heterooligomers with GIT1. Directly interacts with protein Piccolo/PCLO. Interacts with PPFIA1 and PPFIA2. Interacts with ARHGEF7. Identified in a complex with ARHGEF6 and BIN2. Interacts with PAK3. Interacts with PXN/paxillin. Interacts with TGFB1I1. Forms a complex with EFNB1 and GRB4/NCK2.

In terms of biological role, GTPase-activating protein for ADP ribosylation factor family members, including ARF1. This Homo sapiens (Human) protein is ARF GTPase-activating protein GIT2 (GIT2).